Consider the following 316-residue polypeptide: DNA-directed RNA polymerase subunit alpha (316 aa).

The alpha N-terminal domain (alpha-NTD) stretch occupies residues 1–229 (MLEMEKPRID…EYLKLFTEID (229 aa)). The interval 246–316 (KDKILEMSIE…LNLSFRKSED (71 aa)) is alpha C-terminal domain (alpha-CTD).

The protein belongs to the RNA polymerase alpha chain family. In terms of assembly, homodimer. The RNAP catalytic core consists of 2 alpha, 1 beta, 1 beta' and 1 omega subunit. When a sigma factor is associated with the core the holoenzyme is formed, which can initiate transcription.

The enzyme catalyses RNA(n) + a ribonucleoside 5'-triphosphate = RNA(n+1) + diphosphate. Functionally, DNA-dependent RNA polymerase catalyzes the transcription of DNA into RNA using the four ribonucleoside triphosphates as substrates. The chain is DNA-directed RNA polymerase subunit alpha from Syntrophomonas wolfei subsp. wolfei (strain DSM 2245B / Goettingen).